Consider the following 954-residue polypeptide: Protein teashirt (954 aa).

3 disordered regions span residues 20-91 (LPTA…SLPS), 167-207 (ESAE…PQLG), and 276-331 (VKGG…GSGA). The segment covering 47-57 (HGGGAGSGGVG) has biased composition (gly residues). Over residues 292 to 303 (SKATTPQAASQP) the composition is skewed to polar residues. Over residues 318–328 (SGGGSGGGAAG) the composition is skewed to gly residues. The C2H2-type 1 zinc finger occupies 354–378 (FRCVWCKQSFPTLEALTTHMKDSKH). The segment at 383–444 (VPPFGNLPSN…YRGDPPTPLP (62 aa)) is disordered. The span at 417 to 428 (SGSASNHSPSAN) shows a compositional bias: low complexity. 2 consecutive C2H2-type zinc fingers follow at residues 466 to 490 (LKCM…ETQH) and 533 to 557 (LTCK…KNNH). Disordered regions lie at residues 563–622 (LQSA…DKND), 689–714 (FDTP…TSPV), and 748–935 (TSSE…NLTA). Over residues 568–578 (ARKRPAPKKRE) the composition is skewed to basic residues. The span at 579–588 (KSLPVRKLLE) shows a compositional bias: basic and acidic residues. A compositionally biased stretch (low complexity) spans 696-712 (ASLPASSPSNSSTKNTS). S750 and S758 each carry phosphoserine. Residues 778–807 (GHDEESSKPAIKQEREAESKPVKMEIKSEF) show a composition bias toward basic and acidic residues. Residues 842–851 (PKTPSSAASP) show a composition bias toward low complexity. 2 stretches are compositionally biased toward polar residues: residues 862–885 (AESQ…GSSE) and 893–907 (DSLN…SLGS). Positions 910 to 926 (AGANSRAKLAAAAAAGG) are enriched in low complexity.

This sequence belongs to the teashirt C2H2-type zinc-finger protein family. As to quaternary structure, binds arm. As to expression, shows a dynamic expression pattern during embryogenesis. Expressed in the embryonic trunk region (PS 3-13) with expression strongest in the thoracic segments. Expressed in a small group of cells corresponding to the anal tuft from stage 14. Strongly expressed in the embryonic ventral nerve cord. Also expressed in the proximal domain of the leg imaginal disk and in the region of the wing disk that will give rise to the proximal wing hinge. Expressed at high levels in the anterior and central embryonic midgut mesoderm and in the embryonic midgut endoderm. Expressed at a low level in more posterior visceral mesoderm of the gut. From stage 12 onwards, tsh and tio are colocalized in some cells of the CNS, trunk epidermis, hindgut and Malpighian tubules.

It is found in the nucleus. It localises to the cytoplasm. Homeotic protein that acts downstream of Arm in the Wg cascade during embryogenesis to determine segment identity throughout the entire trunk. Acts cooperatively with other trunk homeotic proteins to repress head homeotic genes and therefore repress head segmental identity. Necessary, in combination with Scr, for the formation of the prothoracic segment. Promotes eye development in the dorsal region of the eye disk and suppresses eye development in the ventral region in combination with Wg-signaling and several early dorso-ventral eye patterning genes. Required for proper development of proximal leg segments. Has differential functions along the dorso-ventral axs of the antennal and leg disks. May play a role in wing hinge development. Possible involvement in chromatin structure for modulation of transcription. Binds DNA and can act as both a transcriptional repressor and activator. Positively regulates its own expression as well as that of Dll. Negatively regulates the expression of mod. Required for Wg-mediated transcriptional repression of Ubx in the midgut. Also represses transcription of lab in the midgut and is necessary for the proper formation of anterior and central midgut structures. Tiptop (tio) and teashirt (tsh) have, on the whole, common activities. Tio and tsh repress each other's expression and tsh has a crucial role for trunk patterning that is in part masked by ectopic expression of tiptop. Both genes share a common activity required for the activation of Ser and svb and the maintenance of en and wg. The protein is Protein teashirt (tsh) of Drosophila melanogaster (Fruit fly).